A 316-amino-acid chain; its full sequence is ATP synthase gamma chain (316 aa).

The protein belongs to the ATPase gamma chain family. F-type ATPases have 2 components, CF(1) - the catalytic core - and CF(0) - the membrane proton channel. CF(1) has five subunits: alpha(3), beta(3), gamma(1), delta(1), epsilon(1). CF(0) has three main subunits: a, b and c.

It localises to the cellular thylakoid membrane. Its function is as follows. Produces ATP from ADP in the presence of a proton gradient across the membrane. The gamma chain is believed to be important in regulating ATPase activity and the flow of protons through the CF(0) complex. This chain is ATP synthase gamma chain, found in Prochlorococcus marinus (strain MIT 9301).